A 715-amino-acid chain; its full sequence is SEC14-like protein 1 (715 aa).

Residues 1-510 (MVQKYQSPVR…VPKSLYRTAE (510 aa)) form a required for interaction and inhibitory function toward RIGI region. The 173-residue stretch at 3–175 (QKYQSPVRVY…YLRQLEEEGI (173 aa)) folds into the PRELI/MSF1 domain. Threonine 234 carries the post-translational modification Phosphothreonine. One can recognise a CRAL-TRIO domain in the interval 319-495 (PPQVLLDYYA…FLSGECMCDV (177 aa)). Residues 521–674 (TETIYQSASV…KCKVMYYTEV (154 aa)) form the GOLD domain. Serine 586 bears the Phosphoserine mark.

In terms of assembly, interacts with RIGI (via tandem CARD domain); the interaction is direct. Interacts (via GOLD domain) with SLC18A3; the interaction is direct. Interacts with SLC5A7 (via GOLD domain); the interaction is direct.

The protein localises to the cytoplasm. The protein resides in the golgi apparatus. Its function is as follows. May play a role in innate immunity by inhibiting the antiviral RIG-I signaling pathway. In this pathway, functions as a negative regulator of RIGI, the cytoplasmic sensor of viral nucleic acids. Prevents the interaction of RIGI with MAVS/IPS1, an important step in signal propagation. May also regulate the SLC18A3 and SLC5A7 cholinergic transporters. This is SEC14-like protein 1 from Mus musculus (Mouse).